The following is a 61-amino-acid chain: Temporin-SN4 (61 aa).

An N-terminal signal peptide occupies residues 1 to 22 (MFTLKKTLLLLFFLGTINLSLC). Positions 23 to 44 (EEERNAEEERRDGDDEMDVEVK) are cleaved as a propeptide — removed in mature form. Residue Lys61 is modified to Lysine amide.

It belongs to the frog skin active peptide (FSAP) family. Temporin subfamily. In terms of tissue distribution, expressed by the skin glands.

It is found in the secreted. Antimicrobial peptide. Active against some Gram-positive and Gram-negative bacterial strains. Active against fungus C.glabrata 090902 but not against C.albicans ATCC 12231. Shows weak hemolytic activity against human erythrocytes. The sequence is that of Temporin-SN4 from Sylvirana spinulosa (Fine-spined frog).